The following is an 885-amino-acid chain: Protein kintoun (885 aa).

Disordered stretches follow at residues 208–235 (LSKN…ADAG), 371–390 (LSRE…PVED), 607–636 (ELQQ…ESAC), 644–663 (EHHE…QRSY), 781–806 (RRLS…QPAH), and 819–871 (NNNH…MMFE). Over residues 213–232 (TAEEKEPHPLEHMYPKKPEA) the composition is skewed to basic and acidic residues. S376 is subject to Phosphoserine. The segment covering 612–629 (HHQKKLNKKQRKRNKKQR) has biased composition (basic residues). S784 carries the post-translational modification Phosphoserine. Over residues 824–837 (HVKDNKKQSLHDSG) the composition is skewed to basic and acidic residues. A compositionally biased stretch (low complexity) spans 842-855 (NGSINNKNNHSNEN).

Belongs to the PIH1 family. Kintoun subfamily. In terms of assembly, interacts with Pp1alpha-96A, Pp1-87B, Pp1-13C and flw.

It is found in the cytoplasm. In terms of biological role, required for cytoplasmic pre-assembly of axonemal dyneins, thereby playing a central role in motility in cilia and flagella. Involved in pre-assembly of dynein arm complexes in the cytoplasm before intraflagellar transport loads them for the ciliary compartment. The protein is Protein kintoun of Drosophila mojavensis (Fruit fly).